The following is a 505-amino-acid chain: Prenylcysteine oxidase 1 (505 aa).

The first 27 residues, 1–27 (MGRVVAELVSSLLGLWLLLCSCGCPEG), serve as a signal peptide directing secretion. 3 N-linked (GlcNAc...) asparagine glycosylation sites follow: Asn196, Asn323, and Asn353.

It belongs to the prenylcysteine oxidase family. It depends on FAD as a cofactor. In terms of tissue distribution, widely expressed.

Its subcellular location is the lysosome. It catalyses the reaction an S-polyprenyl-L-cysteine + O2 + H2O = a polyprenal + L-cysteine + H2O2. The enzyme catalyses S-(2E,6E)-farnesyl-L-cysteine + O2 + H2O = (2E,6E)-farnesal + L-cysteine + H2O2. The catalysed reaction is [(2E,6E,10E)-geranylgeranyl]-L-cysteine + O2 + H2O = (2E,6E,10E)-geranylgeranial + L-cysteine + H2O2. Functionally, prenylcysteine oxidase that cleaves the thioether bond of prenyl-L-cysteines, such as farnesylcysteine and geranylgeranylcysteine. Only active against free prenylcysteines and not prenylcysteine residues within prenylated proteins or peptides. Involved in the final step in the degradation of prenylated proteins, by degrading prenylcysteines after the protein has been degraded. This chain is Prenylcysteine oxidase 1, found in Homo sapiens (Human).